The following is a 332-amino-acid chain: Autoinducer 2 import system permease protein LsrD (332 aa).

7 consecutive transmembrane segments (helical) span residues 5-25, 43-63, 83-103, 116-136, 160-180, 210-230, and 259-279; these read LNWE…FGAL, ICIG…GIDI, GWPL…CGLF, LVIT…LSGM, LGGL…FWLL, IPYV…LVMV, and IYGG…VGYL.

It belongs to the binding-protein-dependent transport system permease family. AraH/RbsC subfamily. As to quaternary structure, the complex is composed of two ATP-binding proteins (LsrA), two transmembrane proteins (LsrC and LsrD) and a solute-binding protein (LsrB).

Its subcellular location is the cell inner membrane. Part of the ABC transporter complex LsrABCD involved in autoinducer 2 (AI-2) import. Probably responsible for the translocation of the substrate across the membrane. The polypeptide is Autoinducer 2 import system permease protein LsrD (lsrD) (Klebsiella pneumoniae subsp. pneumoniae (strain ATCC 700721 / MGH 78578)).